The chain runs to 234 residues: R-spondin-4 (234 aa).

An N-terminal signal peptide occupies residues 1–19 (MRAPLCLLLLVAHAVDMLA). Asn34 carries N-linked (GlcNAc...) asparagine glycosylation. Disulfide bonds link Cys35/Cys41, Cys38/Cys47, Cys50/Cys69, Cys73/Cys88, Cys91/Cys98, Cys95/Cys104, Cys107/Cys118, Cys122/Cys135, Cys139/Cys181, Cys150/Cys157, and Cys190/Cys196. An FU repeat occupies 85–128 (VNRCKKCGATCESCFSQDFCIRCKRQFYLYKGKCLPTCPPGTLA). A TSP type-1 domain is found at 138–197 (ECELGPWGGWSPCTHNGKTCGSAWGLESRVREAGRAGHEEAATCQVLSESRKCPIQRPCP). The tract at residues 190–234 (CPIQRPCPGERSPGQKKGRKDRRPRKDRKLDRRLDVRPRQPGLQP) is disordered. Residues 203 to 216 (GQKKGRKDRRPRKD) show a composition bias toward basic residues. Residues 217–227 (RKLDRRLDVRP) show a composition bias toward basic and acidic residues.

The protein belongs to the R-spondin family. In terms of assembly, binds heparin. Interacts with LGR4, LGR5 and LGR6. Post-translationally, tyr-112 may be phosphorylated; however as this position is probably extracellular, the vivo relevance is not proven.

Its subcellular location is the secreted. Its function is as follows. Activator of the canonical Wnt signaling pathway by acting as a ligand for LGR4-6 receptors. Upon binding to LGR4-6 (LGR4, LGR5 or LGR6), LGR4-6 associate with phosphorylated LRP6 and frizzled receptors that are activated by extracellular Wnt receptors, triggering the canonical Wnt signaling pathway to increase expression of target genes. Also regulates the canonical Wnt/beta-catenin-dependent pathway and non-canonical Wnt signaling by acting as an inhibitor of ZNRF3, an important regulator of the Wnt signaling pathway. The sequence is that of R-spondin-4 (RSPO4) from Homo sapiens (Human).